Consider the following 464-residue polypeptide: MESRNDEEAPLISASGEDRKVRAGKCYTRDVHILSISFLLIFLAYGAAQNLETTVNKDLGTISLGILYVSFMFCSMVASLVVRLMGSKNALVLGTTGYWLFVAANLKPSWFTMVPASLYLGFAASIIWVGQGTYLTSIARSHATDHGLHEGSVIGVFNGEFWAMFACHQLFGNLITLALLKDGKEGSTSGTTLLMLVFLFSMTLGTILMFFIRKIDGEDGKGPVGSPVGLVDSLASLPRMIITPLLDIRMLLIVPLLAYSGLQQAFVWAEFTKEIVTPAIGVSGVGGAMAVYGALDAVCSMTAGRFTSGLSSITFIVSGGAVAQASVFLWLLLGYRQTSGVLGTAYPLIMAAILGIGDGILNTQISALLALLFKHDTEGAFAQLKVWQSAAIAIVFFLSPYISLQAMLIVMLVMRDFTVEETHFTSSLLFQNSLSRNSLRFRRCLTIKIWDSLPISWESSFSYW.

11 helical membrane passes run 31 to 51 (VHILSISFLLIFLAYGAAQNL), 62 to 82 (ISLGILYVSFMFCSMVASLVV), 84 to 104 (LMGSKNALVLGTTGYWLFVAA), 110 to 130 (WFTMVPASLYLGFAASIIWVG), 160 to 180 (EFWAMFACHQLFGNLITLALL), 192 to 212 (TLLMLVFLFSMTLGTILMFFI), 251 to 271 (LLIVPLLAYSGLQQAFVWAEF), 275 to 295 (IVTPAIGVSGVGGAMAVYGAL), 313 to 333 (ITFIVSGGAVAQASVFLWLLL), 341 to 361 (VLGTAYPLIMAAILGIGDGIL), and 392 to 412 (IAIVFFLSPYISLQAMLIVML).

Belongs to the unc-93 family.

It is found in the membrane. The sequence is that of UNC93-like protein 3 from Arabidopsis thaliana (Mouse-ear cress).